Reading from the N-terminus, the 28-residue chain is GLGSLLGKAFKIGLKTVGKMMGGAPREQ.

Belongs to the gastrin/cholecystokinin family. Expressed by the skin glands.

It localises to the secreted. In terms of biological role, peptide CPF-B1: Has antimicrobial activity against Gram-negative bacteria E.coli ATCC 25922 (MIC=5 uM) and multidrug-resistant A.baumannii (MIC=4-8 uM), against Gram-positive bacteria S.aureus ATCC 25923 (MIC=5 uM) and methicillin-resistant S.aureus and against fungus C.albicans ATCC 90028 (MIC=25 uM). Has some hemolytic activity against human erythrocytes at high concentrations. The protein is Caerulein precursor fragment B1 of Xenopus borealis (Kenyan clawed frog).